We begin with the raw amino-acid sequence, 190 residues long: dCTP deaminase, dUMP-forming (190 aa).

Residues 101–106 (KSSLGR), Asp-119, 127–129 (TLE), Gln-148, Tyr-162, Lys-170, and Gln-174 contribute to the dCTP site. Residue Glu-129 is the Proton donor/acceptor of the active site. Positions 160–190 (HPYGSSRAGSKYQGQRGPTPSRSYQNFIRST) are disordered. Positions 171–190 (YQGQRGPTPSRSYQNFIRST) are enriched in polar residues.

The protein belongs to the dCTP deaminase family. In terms of assembly, homotrimer.

The catalysed reaction is dCTP + 2 H2O = dUMP + NH4(+) + diphosphate. It functions in the pathway pyrimidine metabolism; dUMP biosynthesis; dUMP from dCTP: step 1/1. In terms of biological role, bifunctional enzyme that catalyzes both the deamination of dCTP to dUTP and the hydrolysis of dUTP to dUMP without releasing the toxic dUTP intermediate. In Mycobacterium tuberculosis (strain ATCC 25177 / H37Ra), this protein is dCTP deaminase, dUMP-forming.